A 250-amino-acid polypeptide reads, in one-letter code: mRNA-decapping protein g5R (250 aa).

One can recognise a Nudix hydrolase domain in the interval 97 to 243; sequence QKFRKNWLLP…IIGPAFNFIK (147 aa). Residues 132–153 carry the Nudix box motif; sequence GKPKEDESDLTCAIREFEEETG. Residue Glu138 participates in Mg(2+) binding. The active-site Nucleophile is the Glu147. 2 residues coordinate Mg(2+): Glu151 and Asp173.

Belongs to the Nudix hydrolase family. DIPP subfamily. In terms of assembly, interacts with host RPL23A. Requires Mg(2+) as cofactor. Mn(2+) is required as a cofactor.

It is found in the host rough endoplasmic reticulum. The catalysed reaction is diphospho-myo-inositol polyphosphate + H2O = myo-inositol polyphosphate + phosphate.. Functionally, decapping enzyme required for the removal of the 5'-end m7GpppN cap tethered to viral and host mRNAs to allow their decay in cells. May therefore accelerate viral and cellular mRNA turnover to eliminate competing host mRNAs and allow stage-specific synthesis of viral proteins. Acceleration of the turnover of cellular transcripts may even promote the shutoff of host protein synthesis. In addition to the mRNA cap, g5R also efficiently hydrolyzes diphosphoinositol polyphosphates. Down-regulation of the level of PP-InsP5 (diphosphoinositol pentakisphosphate) may play a role in viral manipulation of the cellular secretory pathway, a step necessary for the formation of virions. Binds viral and cellular poly(A) mRNAs, thereby decreasing both types of mRNAs. This is mRNA-decapping protein g5R from African swine fever virus (isolate Tick/South Africa/Pretoriuskop Pr4/1996) (ASFV).